The following is a 192-amino-acid chain: Ion-translocating oxidoreductase complex subunit B (192 aa).

Positions 1 to 26 are hydrophobic; it reads MNTIWIAVGALTLLGLVFGAILGYAS. The 60-residue stretch at 32-91 folds into the 4Fe-4S domain; the sequence is EDDPVVEKIDAILPQSQCGQCGYPGCRPYAEAVGLQGEKINRCAPGGEAVMLKIAELLNV. Positions 49, 52, 57, 74, 117, 120, 123, 127, 147, 150, 153, and 157 each coordinate [4Fe-4S] cluster. 4Fe-4S ferredoxin-type domains lie at 108–137 and 138–167; these read MLAVIDENNCIGCTKCIQACPVDAIVGATR and AMHTVMSDLCTGCNLCVDPCPTHCIELRPV.

Belongs to the 4Fe4S bacterial-type ferredoxin family. RnfB subfamily. The complex is composed of six subunits: RsxA, RsxB, RsxC, RsxD, RsxE and RsxG. [4Fe-4S] cluster serves as cofactor.

The protein resides in the cell inner membrane. In terms of biological role, part of a membrane-bound complex that couples electron transfer with translocation of ions across the membrane. Required to maintain the reduced state of SoxR. The sequence is that of Ion-translocating oxidoreductase complex subunit B from Salmonella dublin (strain CT_02021853).